We begin with the raw amino-acid sequence, 446 residues long: Choline monooxygenase, chloroplastic (446 aa).

The N-terminal 65 residues, 1–65 (MAASATTMLL…NTSTNKIITK (65 aa)), are a transit peptide targeting the chloroplast. The Rieske domain occupies 127–234 (WQVAGYSEQV…VAEWGPFILI (108 aa)). Residues cysteine 169, histidine 171, cysteine 188, and histidine 191 each contribute to the [2Fe-2S] cluster site. Fe cation contacts are provided by histidine 294 and histidine 299.

It belongs to the choline monooxygenase family. [2Fe-2S] cluster is required as a cofactor. Requires Fe cation as cofactor. Mg(2+) serves as cofactor. As to expression, expressed in roots and leaves.

It localises to the plastid. The protein resides in the chloroplast stroma. The enzyme catalyses choline + 2 reduced [2Fe-2S]-[ferredoxin] + O2 + 2 H(+) = betaine aldehyde hydrate + 2 oxidized [2Fe-2S]-[ferredoxin] + H2O. It participates in amine and polyamine biosynthesis; betaine biosynthesis via choline pathway; betaine aldehyde from choline (monooxygenase route): step 1/1. Catalyzes the first step of the osmoprotectant glycine betaine synthesis. This chain is Choline monooxygenase, chloroplastic (CMO), found in Beta vulgaris (Sugar beet).